Consider the following 214-residue polypeptide: Germin-like protein (214 aa).

A signal peptide spans Met-1–Ala-22. Cysteines 28 and 44 form a disulfide. The Cupin type-1 domain maps to Ser-58 to Lys-204. His-106, His-108, and Glu-113 together coordinate Mn(2+).

The protein belongs to the germin family. Oligomer (believed to be a pentamer but probably hexamer). As to expression, cotyledons and leaves.

The protein localises to the secreted. The protein resides in the extracellular space. It is found in the apoplast. This Ipomoea nil (Japanese morning glory) protein is Germin-like protein (GLP).